Reading from the N-terminus, the 495-residue chain is Mesoderm induction early response protein 1 (495 aa).

Disordered stretches follow at residues 1-25 (MAEPSLRTASPGGSAASDDHEFEPS) and 76-131 (GSTV…PSFT). A compositionally biased stretch (acidic residues) spans 83–94 (GEEEEDEEDMDN). Over residues 120–130 (QSSNDDPTPSF) the composition is skewed to polar residues. Positions 171–269 (KEIMVGSMFQ…EALRRLRFNV (99 aa)) constitute an ELM2 domain. The SANT domain maps to 274 to 326 (EELSVWTEEECRNFEQGLKAYGKDFHLIQANKVRTRSVGECVAFYYMWKKSER). Disordered stretches follow at residues 356 to 397 (DESE…NGVS) and 416 to 495 (HLNG…HGEV). 2 stretches are compositionally biased toward polar residues: residues 387-397 (TASNNTQNGVS) and 420-440 (PTISSSDPSSNETDTNGYNRE). Basic and acidic residues predominate over residues 462 to 476 (TNERPIKRQRMDSPG). Residues 477–489 (KESTGSSEFSQEV) are compositionally biased toward polar residues.

Its subcellular location is the nucleus. Functionally, transcriptional repressor regulating the expression of a number of genes. Probably functions through recruitment of histone deacetylases involved in chromatin silencing. The sequence is that of Mesoderm induction early response protein 1 (mier1) from Xenopus laevis (African clawed frog).